A 1383-amino-acid polypeptide reads, in one-letter code: WD repeat-containing protein dyf-2 (1383 aa).

WD repeat units follow at residues E32 to L71, N72 to V112, S118 to V157, K160 to T198, and E337 to S376. 7 TPR repeats span residues E756–L789, P810–N847, R885–A918, P940–V973, I996–F1029, L1031–Q1053, and V1064–V1097.

In terms of assembly, component of the IFT complex A (IFT-A) composed of at least che-11, daf-10, dyf-2, ift-139, ift-43 and ifta-1. Expressed in ciliated sensory neurons.

Its subcellular location is the cell projection. It localises to the cilium. In terms of biological role, component of the IFT complex A (IFT-A), a complex required for retrograde ciliary transport. Moves along the ciliary axoneme and is involved in the assembly, localization and the movement of other intraflagellar transport (IFT) proteins along the cilia axoneme. May also associate with the BBSome complex in order to mediate ciliary transport. Regulates cilia biogenesis, morphology and sensitivity to environmental cues. In Caenorhabditis elegans, this protein is WD repeat-containing protein dyf-2.